A 320-amino-acid polypeptide reads, in one-letter code: 1-aminocyclopropane-1-carboxylate oxidase (320 aa).

Positions 156–256 (PTFGTKVSNY…RMSIASFYNP (101 aa)) constitute a Fe2OG dioxygenase domain. Positions 180, 182, and 237 each coordinate Fe cation.

Belongs to the iron/ascorbate-dependent oxidoreductase family. Fe cation serves as cofactor.

It catalyses the reaction 1-aminocyclopropane-1-carboxylate + L-ascorbate + O2 = ethene + L-dehydroascorbate + hydrogen cyanide + CO2 + 2 H2O. It participates in alkene biosynthesis; ethylene biosynthesis via S-adenosyl-L-methionine; ethylene from S-adenosyl-L-methionine: step 2/2. The protein is 1-aminocyclopropane-1-carboxylate oxidase (ACO) of Brassica juncea (Indian mustard).